The following is a 137-amino-acid chain: Large ribosomal subunit protein uL16 (137 aa).

A compositionally biased stretch (basic residues) spans 1–21 (MLSPKKVKFRKRQKGRLKGKA). Residues 1–22 (MLSPKKVKFRKRQKGRLKGKAQ) form a disordered region.

It belongs to the universal ribosomal protein uL16 family. In terms of assembly, part of the 50S ribosomal subunit.

Functionally, binds 23S rRNA and is also seen to make contacts with the A and possibly P site tRNAs. The sequence is that of Large ribosomal subunit protein uL16 from Maridesulfovibrio salexigens (strain ATCC 14822 / DSM 2638 / NCIMB 8403 / VKM B-1763) (Desulfovibrio salexigens).